The sequence spans 356 residues: GDP-mannose:di-myo-inositol-1,3'-phosphate beta-1,2-mannosyltransferase (356 aa).

The protein belongs to the MDIP synthase family. Mg(2+) is required as a cofactor.

The catalysed reaction is bis(myo-inositol) 1,3'-phosphate + GDP-alpha-D-mannose = 2-O-(beta-D-mannosyl)-bis(myo-inositol) 1,3'-phosphate + GDP + H(+). It carries out the reaction 2-O-(beta-D-mannosyl)-bis(myo-inositol) 1,3'-phosphate + GDP-alpha-D-mannose = 2-O-(beta-D-mannosyl-(1-&gt;2)-beta-D-mannosyl)-bis(myo-inositol) 1,3'-phosphate + GDP + H(+). It catalyses the reaction bis(myo-inositol) 1,3'-phosphate + 2 GDP-alpha-D-mannose = 2-O-(beta-D-mannosyl-(1-&gt;2)-beta-D-mannosyl)-bis(myo-inositol) 1,3'-phosphate + 2 GDP + 2 H(+). Its function is as follows. Catalyzes the transfer of the mannosyl group from GDP-mannose to di-myo-inositol-1,3'-phosphate (DIP), producing mannosyl-di-myo-inositol phosphate (MDIP). Can also use MDIP as an acceptor of a second mannose residue, yielding di-mannosyl-di-myo-inositol phosphate (MMDIP). In Aquifex aeolicus (strain VF5), this protein is GDP-mannose:di-myo-inositol-1,3'-phosphate beta-1,2-mannosyltransferase.